We begin with the raw amino-acid sequence, 25 residues long: Defensin D3 (25 aa).

The protein belongs to the DEFL family. Group IV subfamily. In terms of tissue distribution, distributed in the epidermal cell layer of leaves and in the subepidermal layer region of stems. Not in roots.

It is found in the secreted. The protein resides in the cell wall. In terms of biological role, antimicrobial peptide. Active against Fusarium spp., Gram-positive and Gram-negative bacterial pathogens. The chain is Defensin D3 from Spinacia oleracea (Spinach).